An 846-amino-acid chain; its full sequence is Integrin beta-PS (846 aa).

An N-terminal signal peptide occupies residues 1–28 (MILERNRRCQLALLMIAILAAIAGQTDA). Residues 29–777 (QKAAKLTAVS…NKECPAKVFM (749 aa)) are Extracellular-facing. Cysteine 46 and cysteine 55 form a disulfide bridge. Residue asparagine 72 is glycosylated (N-linked (GlcNAc...) asparagine). The 234-residue stretch at 186–419 (DLYYLMDLSK…ELVKEEYRKI (234 aa)) folds into the VWFA domain. Cysteines 249 and 252 form a disulfide. 2 N-linked (GlcNAc...) asparagine glycosylation sites follow: asparagine 266 and asparagine 277. Cysteine 300 and cysteine 341 are disulfide-bonded. N-linked (GlcNAc...) asparagine glycosylation is found at asparagine 403 and asparagine 428. Disulfide bonds link cysteine 441-cysteine 453, cysteine 473-cysteine 741, cysteine 507-cysteine 530, cysteine 522-cysteine 533, cysteine 535-cysteine 544, cysteine 546-cysteine 579, cysteine 561-cysteine 577, cysteine 571-cysteine 582, cysteine 584-cysteine 599, cysteine 601-cysteine 624, cysteine 606-cysteine 622, cysteine 614-cysteine 627, cysteine 629-cysteine 638, cysteine 640-cysteine 664, cysteine 647-cysteine 662, cysteine 656-cysteine 667, cysteine 669-cysteine 682, cysteine 685-cysteine 688, cysteine 692-cysteine 701, cysteine 698-cysteine 771, and cysteine 719-cysteine 749. I-EGF domains follow at residues 507–545 (CENP…NKCE), 546–600 (CSAT…KHCE), 601–639 (CDNF…SNCG), and 640–683 (CQES…RHCE). N-linked (GlcNAc...) asparagine glycosylation occurs at asparagine 557. Asparagine 603 carries N-linked (GlcNAc...) asparagine glycosylation. N-linked (GlcNAc...) asparagine glycosylation is present at asparagine 644. N-linked (GlcNAc...) asparagine glycosylation is present at asparagine 718. The helical transmembrane segment at 778 to 798 (LGIVMGVIAAIVLVGLAILLL) threads the bilayer. At 799–846 (WKLLTTIHDRREFARFEKERMNAKWDTGENPIYKQATSTFKNPMYAGK) the chain is on the cytoplasmic side. 2 positions are modified to phosphotyrosine: tyrosine 831 and tyrosine 843.

Belongs to the integrin beta chain family. Heterodimer of an alpha and a beta subunit. Beta-PS associates with either alpha-PS1, alpha-PS2, alpha-PS3, alpha-PS4 or alpha-PS5. As to expression, in ovaries, strongly expressed in follicle cells. In oocytes, expressed in the forming dorsal appendages (at protein level). Expressed in the embryonic dorsal cuticle, the larval eye and the wing imaginal disk. In testes, detected at the interface between somatic hub cells and cyst stem cells.

It is found in the cell membrane. The protein resides in the apical cell membrane. Its subcellular location is the lateral cell membrane. It localises to the basal cell membrane. Its function is as follows. Integrin alpha-PS1/beta-PS is a receptor for laminin. Integrin alpha-PS2/beta-PS is a receptor for Tig, wb and Ten-m. Contributes to endodermal integrity and adhesion between the midgut epithelium and the surrounding visceral muscle. Essential for migration of the primordial midgut cells and for maintaining, but not establishing, cell polarity in the midgut epithelium. The two beta subunits mediate midgut migration by distinct mechanisms: beta-PS requires rhea/talin and Itgbn does not. Required for rhea/talin correct cellular localization in the midgut. Required for many embryonic (dorsal closure and somatic muscle attachments) and postembryonic developmental processes (attachment between cell layers of imaginal disks, organization of ommatidial arrays and flight muscle development). Involved in the function and/or development of the olfactory system. In the testes, essential for shv-dependent maintenance of somatic hub cells and their localization to the apical tip. Plays a role in timely border cell migration during oogenesis. This is Integrin beta-PS (mys) from Drosophila melanogaster (Fruit fly).